A 410-amino-acid polypeptide reads, in one-letter code: Sprouty-related, EVH1 domain-containing protein 3 (410 aa).

In terms of domain architecture, WH1 spans 1–113 (MVRVRAVVMA…KSLLAALAAL (113 aa)). A disordered region spans residues 117–210 (SLTPSSSSSS…PEPSEPLAGA (94 aa)). 2 stretches are compositionally biased toward low complexity: residues 120 to 130 (PSSSSSSSSPS) and 147 to 165 (DSSS…AAAP). Residues 195 to 244 (LPFTGIPEPSEPLAGAGGLGWGGRGYEDYRRSGPPAPLALSTCVVRFAKT) enclose the KBD domain. Asymmetric dimethylarginine is present on R240. Position 248 is an omega-N-methylarginine (R248). A disordered region spans residues 258–288 (LPAPLTEAAPPAPPARPPPGPGPSSAPAKAS). A compositionally biased stretch (pro residues) spans 267–281 (PPAPPARPPPGPGPS). The SPR domain maps to 296-407 (RCVHCRALFR…CAGCGGRHEE (112 aa)).

In terms of assembly, interacts with palmitoyltransferase ZDHHC17/HIP14; the interaction leads to palmitoylation of SPRED3. In terms of processing, phosphorylated on tyrosine. Palmitoylated by ZDHHC17/HIP14. Post-translationally, ubiquitinated.

The protein resides in the cell membrane. Functionally, tyrosine kinase substrate that inhibits growth-factor-mediated activation of MAP kinase. Inhibits fibroblast growth factor (FGF)-induced retinal lens fiber differentiation, probably by inhibiting FGF-mediated phosphorylation of ERK1/2. Inhibits TGFB-induced epithelial-to-mesenchymal transition in lens epithelial cells. The polypeptide is Sprouty-related, EVH1 domain-containing protein 3 (SPRED3) (Homo sapiens (Human)).